The following is a 203-amino-acid chain: Guanylate kinase (203 aa).

One can recognise a Guanylate kinase-like domain in the interval 3-181 (GTLYIVAAPS…AVSEMCAIFT (179 aa)). 10-17 (APSGAGKS) lines the ATP pocket.

Belongs to the guanylate kinase family.

Its subcellular location is the cytoplasm. The catalysed reaction is GMP + ATP = GDP + ADP. In terms of biological role, essential for recycling GMP and indirectly, cGMP. The protein is Guanylate kinase of Xanthomonas oryzae pv. oryzae (strain MAFF 311018).